Consider the following 340-residue polypeptide: Anthranilate phosphoribosyltransferase (340 aa).

5-phospho-alpha-D-ribose 1-diphosphate-binding positions include G80, 83-84 (GD), T88, 90-93 (NIST), 108-116 (KHGNRAMSS), and S120. G80 serves as a coordination point for anthranilate. Residue S92 coordinates Mg(2+). N111 is a binding site for anthranilate. Residue R166 coordinates anthranilate. 2 residues coordinate Mg(2+): D225 and E226.

This sequence belongs to the anthranilate phosphoribosyltransferase family. As to quaternary structure, homodimer. Requires Mg(2+) as cofactor.

It catalyses the reaction N-(5-phospho-beta-D-ribosyl)anthranilate + diphosphate = 5-phospho-alpha-D-ribose 1-diphosphate + anthranilate. It participates in amino-acid biosynthesis; L-tryptophan biosynthesis; L-tryptophan from chorismate: step 2/5. Catalyzes the transfer of the phosphoribosyl group of 5-phosphorylribose-1-pyrophosphate (PRPP) to anthranilate to yield N-(5'-phosphoribosyl)-anthranilate (PRA). The chain is Anthranilate phosphoribosyltransferase from Chloroflexus aggregans (strain MD-66 / DSM 9485).